Here is a 200-residue protein sequence, read N- to C-terminus: LexA repressor (200 aa).

A DNA-binding region (H-T-H motif) is located at residues 28 to 48 (RAEISNRLGFRSANAAEEHLK). Residues Ser121 and Lys158 each act as for autocatalytic cleavage activity in the active site.

It belongs to the peptidase S24 family. Homodimer.

The enzyme catalyses Hydrolysis of Ala-|-Gly bond in repressor LexA.. Its function is as follows. Represses a number of genes involved in the response to DNA damage (SOS response), including recA and lexA. In the presence of single-stranded DNA, RecA interacts with LexA causing an autocatalytic cleavage which disrupts the DNA-binding part of LexA, leading to derepression of the SOS regulon and eventually DNA repair. This chain is LexA repressor, found in Hahella chejuensis (strain KCTC 2396).